A 183-amino-acid chain; its full sequence is Apo-citrate lyase phosphoribosyl-dephospho-CoA transferase (183 aa).

Belongs to the CitX family.

The catalysed reaction is apo-[citrate lyase ACP] + 2'-(5''-triphospho-alpha-D-ribosyl)-3'-dephospho-CoA = holo-[citrate lyase ACP] + diphosphate. Its function is as follows. Transfers 2-(5''-triphosphoribosyl)-3'-dephosphocoenzyme-A on a serine residue to the apo-acyl carrier protein (gamma chain) of the citrate lyase to yield holo-acyl carrier protein. This is Apo-citrate lyase phosphoribosyl-dephospho-CoA transferase from Escherichia coli O9:H4 (strain HS).